The sequence spans 272 residues: Large ribosomal subunit protein uL2 (272 aa).

The tract at residues 222 to 272 is disordered; sequence GTAMNPVDHPHGGGEGRNFGKHPVSPWGKKTKGKKTRNNRLTDKFIVHRRS. Residues 250-259 are compositionally biased toward basic residues; sequence KKTKGKKTRN. Over residues 261–272 the composition is skewed to basic and acidic residues; the sequence is RLTDKFIVHRRS.

Belongs to the universal ribosomal protein uL2 family. Part of the 50S ribosomal subunit. Forms a bridge to the 30S subunit in the 70S ribosome.

Functionally, one of the primary rRNA binding proteins. Required for association of the 30S and 50S subunits to form the 70S ribosome, for tRNA binding and peptide bond formation. It has been suggested to have peptidyltransferase activity; this is somewhat controversial. Makes several contacts with the 16S rRNA in the 70S ribosome. This chain is Large ribosomal subunit protein uL2, found in Baumannia cicadellinicola subsp. Homalodisca coagulata.